A 320-amino-acid chain; its full sequence is Cytochrome f (320 aa).

Residues 1 to 35 (MQNRNFNNLIIKWAIRLISIMIIINTIFWSSISEA) form the signal peptide. 4 residues coordinate heme: Phe-36, Cys-56, Cys-59, and His-60. The helical transmembrane segment at 286–305 (IQGLLLFFGSVILAQIFLVL) threads the bilayer.

The protein belongs to the cytochrome f family. As to quaternary structure, the 4 large subunits of the cytochrome b6-f complex are cytochrome b6, subunit IV (17 kDa polypeptide, petD), cytochrome f and the Rieske protein, while the 4 small subunits are PetG, PetL, PetM and PetN. The complex functions as a dimer. Requires heme as cofactor.

The protein resides in the plastid. Its subcellular location is the chloroplast thylakoid membrane. In terms of biological role, component of the cytochrome b6-f complex, which mediates electron transfer between photosystem II (PSII) and photosystem I (PSI), cyclic electron flow around PSI, and state transitions. The polypeptide is Cytochrome f (petA) (Marchantia polymorpha (Common liverwort)).